We begin with the raw amino-acid sequence, 145 residues long: Dihydrolipoyllysine-residue succinyltransferase component of 2-oxoglutarate dehydrogenase complex, mitochondrial (145 aa).

The Lipoyl-binding domain occupies Ile4–Leu31. At Ser14 the chain carries Phosphoserine. N6-acetyllysine is present on residues Lys36 and Lys66. Residues His119 and Asp123 contribute to the active site.

Belongs to the 2-oxoacid dehydrogenase family. As to quaternary structure, the 2-oxoglutarate dehydrogenase complex is composed of OGDH (2-oxoglutarate dehydrogenase; E1), DLST (dihydrolipoamide succinyltransferase; E2), DLD (dihydrolipoamide dehydrogenase; E3) and the assembly factor KGD4. It contains multiple copies of the three enzymatic components (E1, E2 and E3). In the nucleus, the 2-oxoglutarate dehydrogenase complex associates with KAT2A. Interacts with ABHD11; this interaction maintains the functional lipoylation of the 2-oxoglutarate dehydrogenase complex. Requires (R)-lipoate as cofactor.

The protein localises to the mitochondrion matrix. Its subcellular location is the nucleus. The catalysed reaction is N(6)-[(R)-dihydrolipoyl]-L-lysyl-[protein] + succinyl-CoA = N(6)-[(R)-S(8)-succinyldihydrolipoyl]-L-lysyl-[protein] + CoA. Its pathway is amino-acid degradation; L-lysine degradation via saccharopine pathway; glutaryl-CoA from L-lysine: step 6/6. It functions in the pathway carbohydrate metabolism; tricarboxylic acid cycle. Functionally, dihydrolipoamide succinyltransferase (E2) component of the 2-oxoglutarate dehydrogenase complex. The 2-oxoglutarate dehydrogenase complex catalyzes the overall conversion of 2-oxoglutarate to succinyl-CoA and CO(2). The 2-oxoglutarate dehydrogenase complex is mainly active in the mitochondrion. A fraction of the 2-oxoglutarate dehydrogenase complex also localizes in the nucleus and is required for lysine succinylation of histones: associates with KAT2A on chromatin and provides succinyl-CoA to histone succinyltransferase KAT2A. The sequence is that of Dihydrolipoyllysine-residue succinyltransferase component of 2-oxoglutarate dehydrogenase complex, mitochondrial from Mesocricetus auratus (Golden hamster).